The following is a 526-amino-acid chain: DDB1- and CUL4-associated factor 17 (526 aa).

2 consecutive transmembrane segments (helical) span residues 200–220 (ILMRVAAFQVFPLQLVGMLEI) and 237–257 (GVLAVSHSSKLVRLYSFEYIV).

It is found in the membrane. The protein resides in the nucleus. The protein localises to the nucleolus. It participates in protein modification; protein ubiquitination. In terms of biological role, may function as a substrate receptor for CUL4-DDB1 E3 ubiquitin-protein ligase complex. The protein is DDB1- and CUL4-associated factor 17 (dcaf17) of Danio rerio (Zebrafish).